Consider the following 164-residue polypeptide: Phosphopantetheine adenylyltransferase (164 aa).

A substrate-binding site is contributed by Thr-9. Residues 9–10 (TF) and His-17 each bind ATP. Residues Lys-41, Leu-73, and Arg-87 each contribute to the substrate site. ATP-binding positions include 88–90 (GLR), Glu-98, and 123–129 (YMFISAT).

This sequence belongs to the bacterial CoaD family. In terms of assembly, homohexamer. Requires Mg(2+) as cofactor.

It localises to the cytoplasm. It carries out the reaction (R)-4'-phosphopantetheine + ATP + H(+) = 3'-dephospho-CoA + diphosphate. Its pathway is cofactor biosynthesis; coenzyme A biosynthesis; CoA from (R)-pantothenate: step 4/5. Functionally, reversibly transfers an adenylyl group from ATP to 4'-phosphopantetheine, yielding dephospho-CoA (dPCoA) and pyrophosphate. The polypeptide is Phosphopantetheine adenylyltransferase (Nitrosomonas eutropha (strain DSM 101675 / C91 / Nm57)).